A 427-amino-acid chain; its full sequence is Histidine--tRNA ligase (427 aa).

It belongs to the class-II aminoacyl-tRNA synthetase family. Homodimer.

It is found in the cytoplasm. It catalyses the reaction tRNA(His) + L-histidine + ATP = L-histidyl-tRNA(His) + AMP + diphosphate + H(+). The sequence is that of Histidine--tRNA ligase from Deinococcus radiodurans (strain ATCC 13939 / DSM 20539 / JCM 16871 / CCUG 27074 / LMG 4051 / NBRC 15346 / NCIMB 9279 / VKM B-1422 / R1).